Consider the following 409-residue polypeptide: Formyl-CoA:oxalate CoA-transferase (409 aa).

CoA is bound by residues 17 to 18, 71 to 74, 95 to 97, R103, and 135 to 138; these read QS, LNTK, NFG, and KAYE. D167 (nucleophile) is an active-site residue. The tract at residues 221 to 245 is disordered; it reads LAEYPNDDFGDEVPRSGNASGGGQP. 242–244 serves as a coordination point for substrate; sequence GGQ.

This sequence belongs to the CoA-transferase III family. Frc subfamily. As to quaternary structure, homodimer.

It catalyses the reaction formyl-CoA + oxalate = oxalyl-CoA + formate. It functions in the pathway metabolic intermediate degradation; oxalate degradation; CO(2) and formate from oxalate: step 1/2. Functionally, involved in the catabolism of oxalate and in the adapatation to low pH via the induction of the oxalate-dependent acid tolerance response (ATR). Catalyzes the transfer of the CoA moiety from formyl-CoA to oxalate. This Streptomyces avermitilis (strain ATCC 31267 / DSM 46492 / JCM 5070 / NBRC 14893 / NCIMB 12804 / NRRL 8165 / MA-4680) protein is Formyl-CoA:oxalate CoA-transferase.